The following is a 226-amino-acid chain: Ribonuclease 3 (226 aa).

Residues 2 to 129 (IESISKIIKY…LIGAIYLDGG (128 aa)) enclose the RNase III domain. E42 lines the Mg(2+) pocket. D46 is a catalytic residue. Mg(2+)-binding residues include N115 and E118. The active site involves E118. In terms of domain architecture, DRBM spans 154 to 223 (DAKTILQELV…ASLMLNQIHN (70 aa)).

This sequence belongs to the ribonuclease III family. In terms of assembly, homodimer. Mg(2+) is required as a cofactor.

The protein resides in the cytoplasm. The catalysed reaction is Endonucleolytic cleavage to 5'-phosphomonoester.. Digests double-stranded RNA. Involved in the processing of primary rRNA transcript to yield the immediate precursors to the large and small rRNAs (23S and 16S). Processes some mRNAs, and tRNAs when they are encoded in the rRNA operon. Processes pre-crRNA and tracrRNA of type II CRISPR loci if present in the organism. The chain is Ribonuclease 3 from Ehrlichia chaffeensis (strain ATCC CRL-10679 / Arkansas).